The primary structure comprises 266 residues: Putative cysteine-rich repeat secretory protein 20 (266 aa).

The signal sequence occupies residues 1-33; that stretch reads MYFPPSSVPKRLVLVHISAVVAIKLLLIRSVSS. Gnk2-homologous domains lie at 40 to 142 and 148 to 261; these read YLQH…SIRN and YNNN…LYPF.

The protein belongs to the cysteine-rich repeat secretory protein family.

Its subcellular location is the secreted. The chain is Putative cysteine-rich repeat secretory protein 20 (CRRSP20) from Arabidopsis thaliana (Mouse-ear cress).